The following is a 233-amino-acid chain: Small ribosomal subunit protein uS2 (233 aa).

This sequence belongs to the universal ribosomal protein uS2 family.

This Bacillus mycoides (strain KBAB4) (Bacillus weihenstephanensis) protein is Small ribosomal subunit protein uS2.